Reading from the N-terminus, the 398-residue chain is S-adenosylmethionine synthase (398 aa).

The tract at residues M1–M21 is disordered. Residue H17 coordinates ATP. Mg(2+) is bound at residue D19. Residue E45 participates in K(+) binding. L-methionine contacts are provided by E58 and Q101. The flexible loop stretch occupies residues Q101–Q111. ATP is bound by residues D177–K179, R244–F245, D253, R259–K260, A276, and K280. D253 is an L-methionine binding site. K284 contributes to the L-methionine binding site.

This sequence belongs to the AdoMet synthase family. Homotetramer; dimer of dimers. The cofactor is Mg(2+). K(+) is required as a cofactor.

It is found in the cytoplasm. The enzyme catalyses L-methionine + ATP + H2O = S-adenosyl-L-methionine + phosphate + diphosphate. The protein operates within amino-acid biosynthesis; S-adenosyl-L-methionine biosynthesis; S-adenosyl-L-methionine from L-methionine: step 1/1. In terms of biological role, catalyzes the formation of S-adenosylmethionine (AdoMet) from methionine and ATP. The overall synthetic reaction is composed of two sequential steps, AdoMet formation and the subsequent tripolyphosphate hydrolysis which occurs prior to release of AdoMet from the enzyme. This Oceanobacillus iheyensis (strain DSM 14371 / CIP 107618 / JCM 11309 / KCTC 3954 / HTE831) protein is S-adenosylmethionine synthase.